Reading from the N-terminus, the 226-residue chain is ATP-dependent dethiobiotin synthetase BioD (226 aa).

12-17 (GVGKTV) contacts ATP. Threonine 16 is a binding site for Mg(2+). Lysine 37 is a catalytic residue. Threonine 41 provides a ligand contact to substrate. Residues aspartate 49, 108 to 111 (EGAG), 169 to 170 (GS), and 197 to 199 (PAG) each bind ATP. The Mg(2+) site is built by aspartate 49 and glutamate 108.

Belongs to the dethiobiotin synthetase family. In terms of assembly, homodimer. Mg(2+) serves as cofactor.

Its subcellular location is the cytoplasm. The catalysed reaction is (7R,8S)-7,8-diammoniononanoate + CO2 + ATP = (4R,5S)-dethiobiotin + ADP + phosphate + 3 H(+). Its pathway is cofactor biosynthesis; biotin biosynthesis; biotin from 7,8-diaminononanoate: step 1/2. Functionally, catalyzes a mechanistically unusual reaction, the ATP-dependent insertion of CO2 between the N7 and N8 nitrogen atoms of 7,8-diaminopelargonic acid (DAPA, also called 7,8-diammoniononanoate) to form a ureido ring. This is ATP-dependent dethiobiotin synthetase BioD from Mycobacterium tuberculosis (strain ATCC 25177 / H37Ra).